Here is an 89-residue protein sequence, read N- to C-terminus: Small ribosomal subunit protein bS20 (89 aa).

Basic residues predominate over residues 1–12 (MANIKSAKKRAK). The tract at residues 1–22 (MANIKSAKKRAKQTIVRNERNT) is disordered.

Belongs to the bacterial ribosomal protein bS20 family.

Functionally, binds directly to 16S ribosomal RNA. In Xanthomonas oryzae pv. oryzae (strain KACC10331 / KXO85), this protein is Small ribosomal subunit protein bS20.